We begin with the raw amino-acid sequence, 874 residues long: Mannuronan C5-epimerase AlgE6 (874 aa).

8 PbH1 repeats span residues 133–155 (DRNV…DPHE), 157–179 (TINL…VADY), 180–202 (QIGG…NIVT), 204–226 (TNDF…VVQR), 234–256 (PENI…LVKM), 257–279 (SNNV…RVYG), 280–302 (AQGV…APEV), and 320–351 (TLNT…DFSS). Hemolysin-type calcium-binding repeat units follow at residues 383-394 (GTDGNDVLIGSD), 401-417 (GGAG…DDLL), 419-435 (GGAG…ADTF), 562-578 (GGGG…GDLL), 580-596 (GGAG…ADTF), 723-739 (GGGG…NDLL), and 741-757 (GGAG…ADTF). The segment at 401–420 (GGAGDDRLDGGAGDDLLDGG) is disordered.

It belongs to the D-mannuronate C5-epimerase family. Ca(2+) serves as cofactor.

It localises to the secreted. The enzyme catalyses [(1-&gt;4)-beta-D-mannuronosyl](n) = [alginate](n). It participates in glycan biosynthesis; alginate biosynthesis. Inhibited by zinc. Converts beta-D-mannuronic acid (M) to alpha-L-guluronic acid (G), producing a polymer with gel-forming capacity, required for the formation of the cyst coat. This Azotobacter vinelandii protein is Mannuronan C5-epimerase AlgE6.